The primary structure comprises 307 residues: 4-hydroxybenzoate octaprenyltransferase (307 aa).

7 helical membrane-spanning segments follow: residues 27–47, 50–70, 101–121, 142–162, 179–199, 239–259, and 285–305; these read AGWLLLLWPTLGALWLAAGGF, WHLLAVFTLGTVLMRSAGCCI, LAVGAVLALAAFALVLTTNAL, CVAMPQAVLGVAFSFGIPMAF, AAVPWWAWGLLIGNLFWVLAY, LLAWGAIGFWQGLGVAFAAGL, and FRLNHWVGFAVFAGIVVDLGW.

The protein belongs to the UbiA prenyltransferase family. Mg(2+) is required as a cofactor.

It is found in the cell inner membrane. The catalysed reaction is all-trans-octaprenyl diphosphate + 4-hydroxybenzoate = 4-hydroxy-3-(all-trans-octaprenyl)benzoate + diphosphate. Its pathway is cofactor biosynthesis; ubiquinone biosynthesis. In terms of biological role, catalyzes the prenylation of para-hydroxybenzoate (PHB) with an all-trans polyprenyl group. Mediates the second step in the final reaction sequence of ubiquinone-8 (UQ-8) biosynthesis, which is the condensation of the polyisoprenoid side chain with PHB, generating the first membrane-bound Q intermediate 3-octaprenyl-4-hydroxybenzoate. The chain is 4-hydroxybenzoate octaprenyltransferase from Methylibium petroleiphilum (strain ATCC BAA-1232 / LMG 22953 / PM1).